A 557-amino-acid polypeptide reads, in one-letter code: Selenoprotein N (557 aa).

The tract at residues 1–24 is disordered; the sequence is MGQARPAARRPHSPDPGAQPAPPR. The signal sequence occupies residues 1–42; that stretch reads MGQARPAARRPHSPDPGAQPAPPRRRARALALLGALLAAAAA. The 36-residue stretch at 67–102 folds into the EF-hand domain; it reads VLGTDGLFLFSSLDTDQDMYISPEEFKPIAEKLTGS. Residue N156 is glycosylated (N-linked (GlcNAc...) asparagine). A non-standard amino acid (selenocysteine) is located at residue U428. N-linked (GlcNAc...) asparagine glycosylation is found at N449 and N497.

As to quaternary structure, interacts with RYR1, RYR2 and RYR3. In terms of processing, N-glycosylated.

The protein localises to the endoplasmic reticulum membrane. Functionally, plays an important role in cell protection against oxidative stress and in the regulation of redox-related calcium homeostasis. Regulates the calcium level of the ER by protecting the calcium pump ATP2A2 against the oxidoreductase ERO1A-mediated oxidative damage. Within the ER, ERO1A activity increases the concentration of H(2)O(2), which attacks the luminal thiols in ATP2A2 and thus leads to cysteinyl sulfenic acid formation (-SOH) and SEPN1 reduces the SOH back to free thiol (-SH), thus restoring ATP2A2 activity. Acts as a modulator of ryanodine receptor (RyR) activity: protects RyR from oxidation due to increased oxidative stress, or directly controls the RyR redox state, regulating the RyR-mediated calcium mobilization required for normal muscle development and differentiation. Essential for muscle regeneration and satellite cell maintenance in skeletal muscle. This Mus musculus (Mouse) protein is Selenoprotein N.